The sequence spans 401 residues: Phosphonopyruvate decarboxylase (401 aa).

The tract at residues 382–401 is disordered; the sequence is WPASAVGSGTRAAAGSAGDR. Residues 384-401 are compositionally biased toward low complexity; that stretch reads ASAVGSGTRAAAGSAGDR.

It belongs to the TPP enzyme family. It depends on thiamine diphosphate as a cofactor. Requires Mg(2+) as cofactor.

It carries out the reaction 3-phosphonopyruvate + H(+) = phosphonoacetaldehyde + CO2. Its pathway is secondary metabolite biosynthesis; bialaphos biosynthesis. Functionally, involved in the biosynthesis of phosphinothricin tripeptide (PTT), also known as bialaphos (BA), a natural-product antibiotic and potent herbicide. Catalyzes the decarboxylation of phosphonopyruvate (PnPy) to generate phosphonoacetaldehyde (PnAA). This chain is Phosphonopyruvate decarboxylase, found in Streptomyces hygroscopicus.